Reading from the N-terminus, the 415-residue chain is Transcription termination factor Rho (415 aa).

The Rho RNA-BD domain maps to 52–119 (ADIASGVLDI…TDVVRVNGRT (68 aa)). Residues 161–166 (GKGQRG), 173–178 (KTGKTV), and Arg204 contribute to the ATP site.

The protein belongs to the Rho family. As to quaternary structure, homohexamer. The homohexamer assembles into an open ring structure.

Its function is as follows. Facilitates transcription termination by a mechanism that involves Rho binding to the nascent RNA, activation of Rho's RNA-dependent ATPase activity, and release of the mRNA from the DNA template. In Streptomyces coelicolor (strain ATCC BAA-471 / A3(2) / M145), this protein is Transcription termination factor Rho.